A 107-amino-acid polypeptide reads, in one-letter code: V-type proton ATPase subunit G (107 aa).

It belongs to the V-ATPase G subunit family. In terms of assembly, V-ATPase is a heteromultimeric enzyme composed of a peripheral catalytic V1 complex (components A to H) attached to an integral membrane V0 proton pore complex (components: a, c, c', c'' and d).

Catalytic subunit of the peripheral V1 complex of vacuolar ATPase (V-ATPase). V-ATPase is responsible for acidifying a variety of intracellular compartments in eukaryotic cells. The protein is V-type proton ATPase subunit G (atp6v1g) of Dictyostelium discoideum (Social amoeba).